Consider the following 419-residue polypeptide: Gamma-glutamyl phosphate reductase (419 aa).

The protein belongs to the gamma-glutamyl phosphate reductase family.

The protein resides in the cytoplasm. The enzyme catalyses L-glutamate 5-semialdehyde + phosphate + NADP(+) = L-glutamyl 5-phosphate + NADPH + H(+). It functions in the pathway amino-acid biosynthesis; L-proline biosynthesis; L-glutamate 5-semialdehyde from L-glutamate: step 2/2. Functionally, catalyzes the NADPH-dependent reduction of L-glutamate 5-phosphate into L-glutamate 5-semialdehyde and phosphate. The product spontaneously undergoes cyclization to form 1-pyrroline-5-carboxylate. The sequence is that of Gamma-glutamyl phosphate reductase from Yersinia enterocolitica serotype O:8 / biotype 1B (strain NCTC 13174 / 8081).